Reading from the N-terminus, the 525-residue chain is D-aminopeptidase (525 aa).

Serine 62 (nucleophile) is an active-site residue. Catalysis depends on lysine 65, which acts as the Proton donor/acceptor. The tract at residues 485–495 is important for specificity; sequence PRALDHTAPGD. Position 489 (aspartate 489) interacts with substrate.

This sequence belongs to the peptidase S12 family. Homodimer.

It catalyses the reaction Release of an N-terminal D-amino acid from a peptide, Xaa-|-Yaa-, in which Xaa is preferably D-Ala, D-Ser or D-Thr. D-amino acid amides and methyl esters also are hydrolyzed, as is glycine amide.. Inhibited by beta-lactam compounds such as 6-aminopenicillic acid, 7-aminocephalosporanic acid, benzylpenicillin and ampicillin. Inhibited by p-chloromercuribenzoate. Its function is as follows. Hydrolyzes N-terminal residues in D-amino acid-containing peptides. This chain is D-aminopeptidase, found in Gluconobacter oxydans (strain 621H) (Gluconobacter suboxydans).